Consider the following 319-residue polypeptide: Acetyl esterase (319 aa).

The Involved in the stabilization of the negatively charged intermediate by the formation of the oxyanion hole signature appears at 91 to 93 (HGG). Active-site residues include Ser165, Asp262, and His292.

This sequence belongs to the 'GDXG' lipolytic enzyme family. Homodimer. Interacts with MalT and MelA.

The protein resides in the cytoplasm. Functionally, displays esterase activity towards short chain fatty esters (acyl chain length of up to 8 carbons). Able to hydrolyze triacetylglycerol (triacetin) and tributyrylglycerol (tributyrin), but not trioleylglycerol (triolein) or cholesterol oleate. Negatively regulates MalT activity by antagonizing maltotriose binding. Inhibits MelA galactosidase activity. The polypeptide is Acetyl esterase (Escherichia coli O139:H28 (strain E24377A / ETEC)).